We begin with the raw amino-acid sequence, 314 residues long: tRNA pseudouridine synthase B (314 aa).

Histidine 43 lines the substrate pocket. The active-site Nucleophile is aspartate 48. Tyrosine 76, tyrosine 179, and leucine 200 together coordinate substrate.

Belongs to the pseudouridine synthase TruB family. Type 1 subfamily.

It carries out the reaction uridine(55) in tRNA = pseudouridine(55) in tRNA. In terms of biological role, responsible for synthesis of pseudouridine from uracil-55 in the psi GC loop of transfer RNAs. The protein is tRNA pseudouridine synthase B of Salmonella paratyphi B (strain ATCC BAA-1250 / SPB7).